We begin with the raw amino-acid sequence, 374 residues long: Phosphate-binding protein PstS 1 (374 aa).

An N-terminal signal peptide occupies residues 1-23; sequence MKIRLHTLLAVLTAAPLLLAAAG. Cysteine 24 carries N-palmitoyl cysteine lipidation. Residue cysteine 24 is the site of S-diacylglycerol cysteine attachment. A disordered region spans residues 25 to 48; the sequence is GSKPPSGSPETGAGAGTVATTPAS. Phosphate-binding positions include 58-60, serine 88, aspartate 106, and 189-191; these read STL and SGD.

It belongs to the PstS family. In terms of assembly, the complex is composed of two ATP-binding proteins (PstB), two transmembrane proteins (PstC and PstA) and a solute-binding protein (PstS).

It is found in the cell membrane. Its function is as follows. Part of the ABC transporter complex PstSACB involved in phosphate import. The sequence is that of Phosphate-binding protein PstS 1 (pstS1) from Mycobacterium tuberculosis (strain CDC 1551 / Oshkosh).